Reading from the N-terminus, the 346-residue chain is MSDDRRLAVLRAIVEDYVSSHEPVGSKALVERHQLGVSPATIRNDMAVLEEEGYITQPHTSAGRIPTDKGYRLFVDRLANVKPMSPAEKRAIQTFLEGADDVDDIVDRTVRLLAQITRQAAVVQYPSLSRAAVRHVELVPVGGRSALLVLITDSGRVEQRVLDVRSAADPESLAAALAALRTRVNARVVGKRLRDAREDLTDLVQQTPPGDLAVAAEVAVALGDCLTAGLEERVVIAGTANLVKSGADLSTSLGSVLEALEEHVVLLRLVQELTEDSDRGGLTVRIGAENLHLGLDGTSVVTSGYGTGPDTVLARLGVLGPTRMDYPTTMAAVRAVSRYVSRILAQ.

Belongs to the HrcA family.

Its function is as follows. Negative regulator of class I heat shock genes (grpE-dnaK-dnaJ and groELS operons). Prevents heat-shock induction of these operons. The sequence is that of Heat-inducible transcription repressor HrcA from Kineococcus radiotolerans (strain ATCC BAA-149 / DSM 14245 / SRS30216).